A 602-amino-acid chain; its full sequence is Multiple epidermal growth factor-like domains protein 9 (602 aa).

A signal peptide spans 1–30 (MNGGAERAMRSLPSLGGLALLCCAAAAAAA). At 31 to 514 (AVASAASAGN…LADVSWTQFN (484 aa)) the chain is on the extracellular side. The segment at 38–199 (AGNVTGGGGA…PATEAPSSPP (162 aa)) is disordered. A glycan (N-linked (GlcNAc...) asparagine) is linked at Asn-40. 2 stretches are compositionally biased toward low complexity: residues 68-85 (PRAT…PPRA) and 139-166 (APTR…TVPA). Pro residues predominate over residues 167–176 (PTTPRTPTPD). A glycan (N-linked (GlcNAc...) asparagine) is linked at Asn-182. Pro residues predominate over residues 187-199 (PTPPATEAPSSPP). Disulfide bonds link Cys-204-Cys-217, Cys-206-Cys-224, Cys-226-Cys-235, Cys-238-Cys-251, Cys-254-Cys-266, Cys-256-Cys-272, Cys-274-Cys-283, Cys-286-Cys-298, Cys-301-Cys-310, Cys-303-Cys-317, Cys-320-Cys-329, Cys-332-Cys-346, Cys-349-Cys-360, Cys-351-Cys-371, Cys-374-Cys-383, Cys-386-Cys-397, Cys-400-Cys-415, Cys-402-Cys-422, Cys-425-Cys-434, and Cys-437-Cys-449. 5 consecutive Laminin EGF-like domains span residues 204-253 (CNCS…LCQP), 254-300 (CDCS…GCLP), 301-348 (CQCN…ECLR), 349-399 (CPCS…ICRK), and 400-451 (CQCH…NCIK). Residues Asn-205 and Asn-218 are each glycosylated (N-linked (GlcNAc...) asparagine). N-linked (GlcNAc...) asparagine glycosylation occurs at Asn-245. An N-linked (GlcNAc...) asparagine glycan is attached at Asn-267. Asn-305 is a glycosylation site (N-linked (GlcNAc...) asparagine). A glycan (N-linked (GlcNAc...) asparagine) is linked at Asn-428. 3 N-linked (GlcNAc...) asparagine glycosylation sites follow: Asn-468, Asn-481, and Asn-500. The helical transmembrane segment at 515-535 (IIILTVIIIVVVLLMGFVGAV) threads the bilayer. Residues 536–602 (YMYREYQNRK…LTTPIHNYKA (67 aa)) lie on the Cytoplasmic side of the membrane.

It localises to the membrane. This chain is Multiple epidermal growth factor-like domains protein 9 (MEGF9), found in Homo sapiens (Human).